The primary structure comprises 260 residues: MIEFRDVWFWYQEGKTVLKSISFSFSEGTLAIVGPNGSGKTTLVKMLNGLLKPKKGNVLIDGINTKEVSVAELSRIVGYVFQNPDAMFFEENVFKEVAFGPKNLGLNEEEVKKRVRWALEAVGLRGFENRNPFELSGGEKQRLAIACILAMKPKYLVLDEPNTGLDERGLQDLINVIKNLRREGSSIILVTHDIELVLEVADKVLLLKDGELKFFGSTKEFFELDLEGFGLKEPELVKISKDVGINFVRNVEELLKVIGL.

Positions 2 to 234 (IEFRDVWFWY…DLEGFGLKEP (233 aa)) constitute an ABC transporter domain. 34-41 (GPNGSGKT) is an ATP binding site.

It belongs to the ABC transporter superfamily.

The protein resides in the cell membrane. Functionally, probably part of an ABC transporter complex. Responsible for energy coupling to the transport system. This Pyrococcus horikoshii (strain ATCC 700860 / DSM 12428 / JCM 9974 / NBRC 100139 / OT-3) protein is Putative ABC transporter ATP-binding protein PH0132.